The following is a 657-amino-acid chain: Protein mono-ADP-ribosyltransferase TIPARP (657 aa).

The segment covering 1-10 (MEMETTEPEP) has biased composition (acidic residues). The tract at residues 1–21 (MEMETTEPEPDCVVQPPSPPD) is disordered. Residue C39 is modified to ADP-ribosylcysteine. Positions 41–47 (KKKDQKR) match the Nuclear localization signal motif. A C3H1-type zinc finger spans residues 237-264 (ENGIEICMDFLQGTCIYGRDCLKHHTVL). The 79-residue stretch at 332-410 (STPPSSNVNS…RRPLFRSCFI (79 aa)) folds into the WWE domain. The region spanning 449–657 (YPETWVYMHP…YEEVSNTVSI (209 aa)) is the PARP catalytic domain.

It belongs to the ARTD/PARP family. Interacts with AHR. Post-translationally, auto-mono-ADP-ribosylated.

It is found in the nucleus. The catalysed reaction is L-aspartyl-[protein] + NAD(+) = 4-O-(ADP-D-ribosyl)-L-aspartyl-[protein] + nicotinamide. It carries out the reaction L-glutamyl-[protein] + NAD(+) = 5-O-(ADP-D-ribosyl)-L-glutamyl-[protein] + nicotinamide. It catalyses the reaction L-cysteinyl-[protein] + NAD(+) = S-(ADP-D-ribosyl)-L-cysteinyl-[protein] + nicotinamide + H(+). With respect to regulation, ADP-ribosyltransferase activity is inhibited by PJ34; inhibition is however not specific to TIPARP and other PARP-domain containing proteins are also inhibited by PJ34. Partially inhibited by KU0058948. In terms of biological role, ADP-ribosyltransferase that mediates mono-ADP-ribosylation of glutamate, aspartate and cysteine residues on target proteins. Acts as a negative regulator of AHR by mediating mono-ADP-ribosylation of AHR, leading to inhibit transcription activator activity of AHR. This is Protein mono-ADP-ribosyltransferase TIPARP from Homo sapiens (Human).